Here is a 469-residue protein sequence, read N- to C-terminus: Trigger factor (469 aa).

The PPIase FKBP-type domain occupies 165–250 (GDCVTIDYLG…VKAISKPDEL (86 aa)). Residues 439–460 (EYDESDLTEKKPEKKKGVEKTP) show a composition bias toward basic and acidic residues. The segment at 439–469 (EYDESDLTEKKPEKKKGVEKTPIRKKAPKKG) is disordered.

This sequence belongs to the FKBP-type PPIase family. Tig subfamily.

Its subcellular location is the cytoplasm. It catalyses the reaction [protein]-peptidylproline (omega=180) = [protein]-peptidylproline (omega=0). Functionally, involved in protein export. Acts as a chaperone by maintaining the newly synthesized protein in an open conformation. Functions as a peptidyl-prolyl cis-trans isomerase. The chain is Trigger factor from Bartonella quintana (strain Toulouse) (Rochalimaea quintana).